Reading from the N-terminus, the 815-residue chain is Cilia- and flagella-associated protein 251 (815 aa).

WD repeat units lie at residues G58–T99, P103–E148, P166–Q205, Q218–G257, I271–F308, S379–G418, A420–V460, N463–R502, S511–G553, and S573–S612.

In terms of assembly, identified in a spoke-associated complex containing CFAP61, CFAP91 and CFAP251; the complex is associated with the radial spokes in the axoneme. The complex associates with Calmodulin; the association is calcium sensitive.

Its subcellular location is the cytoplasm. It localises to the cytoskeleton. The protein localises to the flagellum axoneme. Functionally, as component of a spoke-associated complex, regulates flagellar dynein activity by mediating regulatory signals between the radial spokes and dynein arms. This chain is Cilia- and flagella-associated protein 251, found in Chlamydomonas reinhardtii (Chlamydomonas smithii).